Reading from the N-terminus, the 1068-residue chain is Leucine zipper protein 1 (1068 aa).

An N-acetylalanine modification is found at Ala2. Residues 11 to 354 (ASNRHLRFKL…KLQVRKQKEL (344 aa)) adopt a coiled-coil conformation. Disordered regions lie at residues 251–292 (LSSK…VKDL), 375–402 (TKLK…KRER), and 432–558 (AAKA…QAVE). Over residues 254–292 (KESKRKGSLDYLKQVENETRDKSENEKNRNQEDNKVKDL) the composition is skewed to basic and acidic residues. A phosphoserine mark is found at Ser256, Ser261, Ser395, Ser513, Ser571, Ser575, Ser612, and Ser660. The span at 510–519 (RTFSDSTHVS) shows a compositional bias: polar residues. Residues 677-700 (TTITPEPEPKPQPNSREKVKSRGG) form a disordered region. Residue Thr680 is modified to Phosphothreonine. 2 positions are modified to phosphoserine: Ser691 and Ser746. A disordered region spans residues 782–829 (QKSTSKSVTSKVTSSITIYPSDSSGPRAVPSEAPRERHTSTSNIQVGP). Residues 785–796 (TSKSVTSKVTSS) are compositionally biased toward low complexity. The segment at 834–884 (AISNHVSSPLELSIHKHDITLQLTEAERVGDGSPKNRAEMVVSRSSILIKP) is required for interaction with FLNA. Ser906 carries the phosphoserine modification. The interval 924 to 945 (RDLKCSEDPPTGIGRNMEATNA) is disordered. At Thr952 the chain carries Phosphothreonine. 2 disordered regions span residues 959–995 (QPRS…ASEV) and 1033–1068 (NPLE…AEED). A compositionally biased stretch (polar residues) spans 984-994 (RRTQSSLTASE). A Phosphoserine modification is found at Ser988.

Component of the CERF-1 ISWI chromatin remodeling complex (also called the CECR2-containing remodeling factor (CERF) complex) at least composed of CECR2 and SMARCA1. Component of the CERF-5 ISWI chromatin remodeling complex at least composed of CECR2 and SMARCA5/SNF2H. LUZP1 is detected as part of the CERF-1 and CERF-5 complexes in embryonic stem (ES) cells where it is involved in complex stabilization but is not detected in the complexes in the testis. Interacts (via C-terminus) with LIMA1/EPLIN; both proteins restrict ciliation and may work together to regulate this process. Interacts with myosin light chain MYL9; the interaction results in inhibition of phosphorylation of MYL9 by DAPK3. Interacts with DAPK3; the interaction is likely to occur throughout the cell cycle and reduces the LUZP1-mediated suppression of MYL9 phosphorylation. Interacts with the chromosomal passenger complex (CPC); CPC kinase activity is required for localization of LUZP1 to the centromere. As to expression, predominantly expressed in the brain (at protein level).

It localises to the cytoplasm. Its subcellular location is the cytoskeleton. The protein localises to the microtubule organizing center. It is found in the centrosome. The protein resides in the cilium basal body. It localises to the midbody. Its subcellular location is the chromosome. The protein localises to the centromere. It is found in the spindle. The protein resides in the stress fiber. It localises to the nucleus. Its subcellular location is the cell projection. The protein localises to the dendrite. It is found in the perikaryon. The protein resides in the cell junction. It localises to the tight junction. F-actin cross-linking protein. Stabilizes actin and acts as a negative regulator of primary cilium formation. Positively regulates the phosphorylation of both myosin II and protein phosphatase 1 regulatory subunit PPP1R12A/MYPT1 and promotes the assembly of myosin II stacks within actin stress fibers. Inhibits the phosphorylation of myosin light chain MYL9 by DAPK3 and suppresses the constriction velocity of the contractile ring during cytokinesis. Binds to microtubules and promotes epithelial cell apical constriction by up-regulating levels of diphosphorylated myosin light chain (MLC) through microtubule-dependent inhibition of MLC dephosphorylation by myosin phosphatase. Involved in regulation of cell migration, nuclear size and centriole number, probably through regulation of the actin cytoskeleton. Component of the CERF-1 and CERF-5 chromatin remodeling complexes in embryonic stem cells where it acts to stabilize the complexes. Plays a role in embryonic brain and cardiovascular development. This is Leucine zipper protein 1 (Luzp1) from Mus musculus (Mouse).